A 45-amino-acid polypeptide reads, in one-letter code: MSKRTFQPNNRRRAKTHGFRLRMRTRAGRAILATRRSKGRARLSA.

This sequence belongs to the bacterial ribosomal protein bL34 family.

The sequence is that of Large ribosomal subunit protein bL34 (rpmH) from Streptomyces coelicolor (strain ATCC BAA-471 / A3(2) / M145).